Reading from the N-terminus, the 916-residue chain is Protein translocase subunit SecA (916 aa).

Residues glutamine 86, 104-108, and aspartate 494 each bind ATP; that span reads GEGKT. Residues 859-916 form a disordered region; that stretch reads LEAPEKPAQLQYTAPSEGGGTQTRVETRSTGRSGNPAKAAEQDAAKDAAKRPAKKKRR. Residues 880–891 show a composition bias toward polar residues; it reads QTRVETRSTGRS. Residues 898–908 show a composition bias toward basic and acidic residues; it reads AEQDAAKDAAK.

The protein belongs to the SecA family. In terms of assembly, monomer and homodimer. Part of the essential Sec protein translocation apparatus which comprises SecA, SecYEG and auxiliary proteins SecDF. Other proteins may also be involved.

The protein resides in the cell membrane. The protein localises to the cytoplasm. It carries out the reaction ATP + H2O + cellular proteinSide 1 = ADP + phosphate + cellular proteinSide 2.. Its function is as follows. Part of the Sec protein translocase complex. Interacts with the SecYEG preprotein conducting channel. Has a central role in coupling the hydrolysis of ATP to the transfer of proteins into and across the cell membrane, serving as an ATP-driven molecular motor driving the stepwise translocation of polypeptide chains across the membrane. The protein is Protein translocase subunit SecA of Pseudarthrobacter chlorophenolicus (strain ATCC 700700 / DSM 12829 / CIP 107037 / JCM 12360 / KCTC 9906 / NCIMB 13794 / A6) (Arthrobacter chlorophenolicus).